A 101-amino-acid polypeptide reads, in one-letter code: Small ribosomal subunit protein uS14 (101 aa).

Belongs to the universal ribosomal protein uS14 family. In terms of assembly, part of the 30S ribosomal subunit. Contacts proteins S3 and S10.

In terms of biological role, binds 16S rRNA, required for the assembly of 30S particles and may also be responsible for determining the conformation of the 16S rRNA at the A site. The chain is Small ribosomal subunit protein uS14 from Alteromonas mediterranea (strain DSM 17117 / CIP 110805 / LMG 28347 / Deep ecotype).